The following is a 96-amino-acid chain: Co-chaperonin GroES (96 aa).

The protein belongs to the GroES chaperonin family. In terms of assembly, heptamer of 7 subunits arranged in a ring. Interacts with the chaperonin GroEL.

The protein resides in the cytoplasm. Together with the chaperonin GroEL, plays an essential role in assisting protein folding. The GroEL-GroES system forms a nano-cage that allows encapsulation of the non-native substrate proteins and provides a physical environment optimized to promote and accelerate protein folding. GroES binds to the apical surface of the GroEL ring, thereby capping the opening of the GroEL channel. The polypeptide is Co-chaperonin GroES (Nitrosomonas eutropha (strain DSM 101675 / C91 / Nm57)).